The chain runs to 332 residues: MATLKDQLIHNLLKEEQTPQNKITVVGVGAVGMACAISILMKDLADELALVDVIEDKLKGEMMDLQHGSLFLRTPKIVSGKDYNVTANSKLVIITAGARQQEGESRLNLVQRNVNIFKFIIPNVVKYSPNCKLLIVSNPVDILTYVAWKISGFPKNRVIGSGCNLDSARFRYLMGERLGVHPSSCHGWVLGEHGDSSVPVWSGMNVAGVSLKTLHPDLGTDKDKEQWKEVHKQVVESAYEVIKLKGYTSWAIGLSVADLAESIMKNLRRVHPVSTMIKGLYGIKDDVFLSVPCILGQNGISDLVKVTLTSEEEARLKKSADTLWGIQKELQF.

N-acetylalanine is present on alanine 2. The residue at position 5 (lysine 5) is an N6-acetyllysine; alternate. Lysine 5 is subject to N6-succinyllysine; alternate. Lysine 14 carries the N6-acetyllysine modification. The residue at position 18 (threonine 18) is a Phosphothreonine. 29 to 57 (GAVGMACAISILMKDLADELALVDVIEDK) contributes to the NAD(+) binding site. Lysine 57 is subject to N6-acetyllysine; alternate. A Glycyl lysine isopeptide (Lys-Gly) (interchain with G-Cter in SUMO2); alternate cross-link involves residue lysine 57. Lysine 81 bears the N6-acetyllysine mark. Arginine 99 serves as a coordination point for NAD(+). Arginine 106 is a binding site for substrate. Lysine 118 is subject to N6-acetyllysine; alternate. At lysine 118 the chain carries N6-succinyllysine; alternate. Position 126 is an N6-acetyllysine (lysine 126). 2 residues coordinate substrate: asparagine 138 and arginine 169. Histidine 193 functions as the Proton acceptor in the catalytic mechanism. Residues lysine 224 and lysine 232 each carry the N6-acetyllysine modification. Tyrosine 239 is modified (phosphotyrosine). Position 243 is an N6-acetyllysine (lysine 243). Substrate is bound at residue threonine 248. Threonine 309 bears the Phosphothreonine mark. Serine 310 is subject to Phosphoserine. The residue at position 318 (lysine 318) is an N6-acetyllysine; alternate. At lysine 318 the chain carries N6-succinyllysine; alternate. Residue threonine 322 is modified to Phosphothreonine.

Belongs to the LDH/MDH superfamily. LDH family. As to quaternary structure, homotetramer. Interacts with PTEN upstream reading frame protein MP31. ISGylated.

It localises to the cytoplasm. It catalyses the reaction (S)-lactate + NAD(+) = pyruvate + NADH + H(+). It functions in the pathway fermentation; pyruvate fermentation to lactate; (S)-lactate from pyruvate: step 1/1. Its function is as follows. Interconverts simultaneously and stereospecifically pyruvate and lactate with concomitant interconversion of NADH and NAD(+). The sequence is that of L-lactate dehydrogenase A chain (LDHA) from Pongo abelii (Sumatran orangutan).